The following is an 825-amino-acid chain: Glycerol-3-phosphate acyltransferase (825 aa).

The HXXXXD motif signature appears at 306–311 (CHRSHM). Residues 802–825 (SASSSTEMEASTSSSQTAEETTQG) form a disordered region.

The protein belongs to the GPAT/DAPAT family.

Its subcellular location is the cell inner membrane. The catalysed reaction is sn-glycerol 3-phosphate + an acyl-CoA = a 1-acyl-sn-glycero-3-phosphate + CoA. The protein operates within phospholipid metabolism; CDP-diacylglycerol biosynthesis; CDP-diacylglycerol from sn-glycerol 3-phosphate: step 1/3. In Pectobacterium atrosepticum (strain SCRI 1043 / ATCC BAA-672) (Erwinia carotovora subsp. atroseptica), this protein is Glycerol-3-phosphate acyltransferase.